The sequence spans 381 residues: Early boundary activity protein 2 (381 aa).

Residues 210–245 (NDAEDVPAPPSKRPRHMSTSSSESHIPDTASEKDEK) are disordered. The region spanning 268-365 (PNGTQITAHQ…TKCADTAKKY (98 aa)) is the BEN domain.

In terms of assembly, the heterotrimeric Elba complex consists of Elba1, Elba2 and Elba3.

It localises to the nucleus. Its function is as follows. The heterotrimeric Elba complex is required for chromatin domain boundary function during early embryogenesis. It binds to a 8-bp sequence 5'-CCAATAAG-3' in the Fab-7 insulator or boundary element in the bithorax complex and contributes to its insulator or boundary activity. Elba2 can act as a transcriptional repressor and binds the palindromic sequence 5'-CCAATTGG-3' to mediate transcriptional repression. This Drosophila melanogaster (Fruit fly) protein is Early boundary activity protein 2.